Consider the following 393-residue polypeptide: S-adenosylmethionine synthase 2 (393 aa).

E9 contributes to the Mg(2+) binding site. H15 lines the ATP pocket. Residue E43 coordinates K(+). Residues E56 and Q99 each contribute to the L-methionine site. ATP contacts are provided by residues 167–169, 235–238, D246, 252–253, A269, K273, and K277; these read DGK, SGRF, and RK. Residue D246 coordinates L-methionine. K277 lines the L-methionine pocket.

The protein belongs to the AdoMet synthase family. As to quaternary structure, homotetramer. Mn(2+) serves as cofactor. Requires Mg(2+) as cofactor. It depends on Co(2+) as a cofactor. K(+) is required as a cofactor. As to expression, mostly expressed in roots. Also present in stems and leaves.

The protein resides in the cytoplasm. The enzyme catalyses L-methionine + ATP + H2O = S-adenosyl-L-methionine + phosphate + diphosphate. It functions in the pathway amino-acid biosynthesis; S-adenosyl-L-methionine biosynthesis; S-adenosyl-L-methionine from L-methionine: step 1/1. In terms of biological role, catalyzes the formation of S-adenosylmethionine from methionine and ATP. The reaction comprises two steps that are both catalyzed by the same enzyme: formation of S-adenosylmethionine (AdoMet) and triphosphate, and subsequent hydrolysis of the triphosphate. In Solanum lycopersicum (Tomato), this protein is S-adenosylmethionine synthase 2 (SAM2).